A 289-amino-acid polypeptide reads, in one-letter code: CCR4-associated factor 16 (289 aa).

The ABC transporter domain occupies 7–249; sequence IEVRNLTYKF…SEVVNAKVNG (243 aa). 41–48 is a binding site for ATP; sequence GANGAGKS.

The protein belongs to the ABC transporter superfamily. Interacts with CCR4 and SSN2.

It localises to the cytoplasm. The protein resides in the nucleus. In Saccharomyces cerevisiae (strain ATCC 204508 / S288c) (Baker's yeast), this protein is CCR4-associated factor 16 (CAF16).